The following is a 577-amino-acid chain: Aspartate--tRNA ligase (577 aa).

Glu171 contributes to the L-aspartate binding site. Residues 195–198 (QLFK) form an aspartate region. Arg217 is a binding site for L-aspartate. Residues 217–219 (RDE) and Gln226 each bind ATP. Residue His437 participates in L-aspartate binding. Glu472 is a binding site for ATP. Residue Arg479 coordinates L-aspartate. Residue 524-527 (GFDR) coordinates ATP.

The protein belongs to the class-II aminoacyl-tRNA synthetase family. Type 1 subfamily. As to quaternary structure, homodimer.

It is found in the cytoplasm. It carries out the reaction tRNA(Asp) + L-aspartate + ATP = L-aspartyl-tRNA(Asp) + AMP + diphosphate. In terms of biological role, catalyzes the attachment of L-aspartate to tRNA(Asp) in a two-step reaction: L-aspartate is first activated by ATP to form Asp-AMP and then transferred to the acceptor end of tRNA(Asp). In Deinococcus deserti (strain DSM 17065 / CIP 109153 / LMG 22923 / VCD115), this protein is Aspartate--tRNA ligase.